A 689-amino-acid chain; its full sequence is Elongation factor G (689 aa).

The tr-type G domain maps to 8 to 283 (SKCRNIGIMA…AVVDFLPAPN (276 aa)). GTP contacts are provided by residues 17 to 24 (AHIDAGKT), 81 to 85 (DTPGH), and 135 to 138 (NKMD).

It belongs to the TRAFAC class translation factor GTPase superfamily. Classic translation factor GTPase family. EF-G/EF-2 subfamily.

It is found in the cytoplasm. Functionally, catalyzes the GTP-dependent ribosomal translocation step during translation elongation. During this step, the ribosome changes from the pre-translocational (PRE) to the post-translocational (POST) state as the newly formed A-site-bound peptidyl-tRNA and P-site-bound deacylated tRNA move to the P and E sites, respectively. Catalyzes the coordinated movement of the two tRNA molecules, the mRNA and conformational changes in the ribosome. This Ehrlichia ruminantium (strain Welgevonden) protein is Elongation factor G.